Reading from the N-terminus, the 362-residue chain is tRNA-specific 2-thiouridylase MnmA 1 (362 aa).

ATP is bound by residues 12 to 19 (GMSGGVDS) and Met-38. Residue Cys-104 is the Nucleophile of the active site. Cys-104 and Cys-200 form a disulfide bridge. Gly-128 is a binding site for ATP. The segment at 150 to 152 (KDQ) is interaction with tRNA. Residue Cys-200 is the Cysteine persulfide intermediate of the active site. Residues 306-307 (RY) are interaction with tRNA.

The protein belongs to the MnmA/TRMU family.

The protein resides in the cytoplasm. It carries out the reaction S-sulfanyl-L-cysteinyl-[protein] + uridine(34) in tRNA + AH2 + ATP = 2-thiouridine(34) in tRNA + L-cysteinyl-[protein] + A + AMP + diphosphate + H(+). In terms of biological role, catalyzes the 2-thiolation of uridine at the wobble position (U34) of tRNA, leading to the formation of s(2)U34. This is tRNA-specific 2-thiouridylase MnmA 1 from Clostridium tetani (strain Massachusetts / E88).